An 84-amino-acid chain; its full sequence is Delta-conotoxin-like Bt6.4 (84 aa).

The first 22 residues, 1-22, serve as a signal peptide directing secretion; sequence MKLTCMVIVAVLFLTAWTSVMA. Residues 23 to 57 constitute a propeptide that is removed on maturation; that stretch reads DGSINRPDIAEGWQKFFSKARDEMKNRAASELNKR. 3 cysteine pairs are disulfide-bonded: Cys58/Cys74, Cys65/Cys78, and Cys73/Cys82.

This sequence belongs to the conotoxin O1 superfamily. As to expression, expressed by the venom duct.

It is found in the secreted. This toxin activates voltage-gated sodium channels. It shifts the voltage-dependence of activation to more hyperpolarized potentials but has only little effect on channel inactivation. It is active on Nav1.3/SCN3A (EC(50)=3.98 nM), Nav1.4/SCN4A (EC(50)=4.99 nM), Nav1.6/SCN8A (EC(50)=1.27 nM) and Nav1.7/SCN9A (EC(50)=2.42 nM) voltage-gated sodium channels. In vivo, it induces nocifensive or pain-like behaviors in mice when injected intraplantarly. The sequence is that of Delta-conotoxin-like Bt6.4 from Conus betulinus (Beech cone).